A 166-amino-acid polypeptide reads, in one-letter code: Small ribosomal subunit protein uS5 (166 aa).

Residues leucine 11–valine 74 enclose the S5 DRBM domain.

It belongs to the universal ribosomal protein uS5 family. Part of the 30S ribosomal subunit. Contacts proteins S4 and S8.

Functionally, with S4 and S12 plays an important role in translational accuracy. In terms of biological role, located at the back of the 30S subunit body where it stabilizes the conformation of the head with respect to the body. The sequence is that of Small ribosomal subunit protein uS5 from Marinobacter nauticus (strain ATCC 700491 / DSM 11845 / VT8) (Marinobacter aquaeolei).